The following is a 110-amino-acid chain: UPF0122 protein LMOf2365_1829 (110 aa).

Belongs to the UPF0122 family.

Might take part in the signal recognition particle (SRP) pathway. This is inferred from the conservation of its genetic proximity to ftsY/ffh. May be a regulatory protein. This Listeria monocytogenes serotype 4b (strain F2365) protein is UPF0122 protein LMOf2365_1829.